Reading from the N-terminus, the 41-residue chain is Alpha-conotoxin TxIB (41 aa).

A propeptide spanning residues 1-20 is cleaved from the precursor; the sequence is FDGRNTSANNKATDLMALPV. Cystine bridges form between Cys23–Cys29 and Cys24–Cys37. A ser-Xaa-Pro motif, crucial for potent interaction with nAChR region spans residues 25–27; the sequence is SDP. Cys37 carries the cysteine amide; in Alpha-conotoxin TxIB modification. A propeptide spanning residues 39–41 is cleaved from the precursor; the sequence is GRR.

Belongs to the conotoxin A superfamily. In terms of tissue distribution, expressed by the venom duct.

It is found in the secreted. In terms of biological role, alpha-conotoxins act on postsynaptic membranes, they bind to the nicotinic acetylcholine receptors (nAChR) and thus inhibit them. This conotoxin is a subtype-specific blocker of alpha-6/alpha-3-beta-2-beta-3 (CHRNA6/CHRNA3-CHRNB2-CHRNB3) nAChRs nicotinic acetylcholine receptors (nAChRs) (IC(50)=28.4 nM). This is Alpha-conotoxin TxIB from Conus textile (Cloth-of-gold cone).